The sequence spans 270 residues: tRNA pseudouridine synthase A (270 aa).

Residue Asp51 is the Nucleophile of the active site. Tyr109 provides a ligand contact to substrate.

This sequence belongs to the tRNA pseudouridine synthase TruA family. In terms of assembly, homodimer.

It catalyses the reaction uridine(38/39/40) in tRNA = pseudouridine(38/39/40) in tRNA. Functionally, formation of pseudouridine at positions 38, 39 and 40 in the anticodon stem and loop of transfer RNAs. The polypeptide is tRNA pseudouridine synthase A (Burkholderia thailandensis (strain ATCC 700388 / DSM 13276 / CCUG 48851 / CIP 106301 / E264)).